Here is a 405-residue protein sequence, read N- to C-terminus: Nicotinate phosphoribosyltransferase (405 aa).

His-230 carries the post-translational modification Phosphohistidine; by autocatalysis.

The protein belongs to the NAPRTase family. Post-translationally, transiently phosphorylated on a His residue during the reaction cycle. Phosphorylation strongly increases the affinity for substrates and increases the rate of nicotinate D-ribonucleotide production. Dephosphorylation regenerates the low-affinity form of the enzyme, leading to product release.

It carries out the reaction nicotinate + 5-phospho-alpha-D-ribose 1-diphosphate + ATP + H2O = nicotinate beta-D-ribonucleotide + ADP + phosphate + diphosphate. It functions in the pathway cofactor biosynthesis; NAD(+) biosynthesis; nicotinate D-ribonucleotide from nicotinate: step 1/1. Functionally, catalyzes the synthesis of beta-nicotinate D-ribonucleotide from nicotinate and 5-phospho-D-ribose 1-phosphate at the expense of ATP. This is Nicotinate phosphoribosyltransferase from Bordetella bronchiseptica (strain ATCC BAA-588 / NCTC 13252 / RB50) (Alcaligenes bronchisepticus).